Reading from the N-terminus, the 3023-residue chain is MSTLPKPKRQTKRNTLRRPKNVKFPAGGQIVGEVYVLPRRGPQLGVREVRKTSERSQPRGRRQPTPKARPREGRSWAQPGYPWPLYGNEGCGWAGWLLPPRGSRPSWGQNDPRRRSRNLGKVIDTLTCGFADLMGYIPLIGAPVGGVARALAHGVRALEDGVNYATGNLPGCSFSIFLLALFSCLTCPASSLEYRNASGLYLLTNDCSNRSIVYEADDVILHLPGCVPCVETDNNNTSCWTPISPTVAVKHPGVTTASIRNHVNMLVAPPTLCSALYVEDAFGAVSLVGQAFTFRPRQHKTVQTCNCSIYPGHVSGHRMAWDMMMNWSPAIGLVISHLMRLPQTFFDLVVGAHWGVMAGLAYFSMQGNWAKVVIVLIMFSGVDATTHTTGGSAAQATAGFTSFFTRGPSQNLQLVNSNGSWHINSTALNCNDSLNTGFIAGLFYYHKFNSSGCPERMSSCKPITYFNQGWGPLTDANINGPSEDRPYCWHYPPRPCNITKPLNVCGPVYCFTPSPVVVGTTDIKGLPTYRFGVNESDVFLLTSLRPPQGRWFGCVWMNSTGFVKTCGAPPCNIYGGMKDIEANQTHLKCPTDCFRKHHDATFTRCGSGPWLTPRCLVDYPYRLWHYPCTVNFSIFKVRMFVGGHEHRFSAACNWTRGERCDLEDRDRSEQQPLLHSTTDSLILPCSFTPMRRLSTGLIHLHQNIVDVQYLYGVGSAVVGWALKWEFVVLVFLLLADARVCVALWMMLLISQAEAAMENLVMLNALSAAGQQGYVWYLVAFCAAWHIRGKLVPLITYGLTGLWPLALLDLLLPQRAYAWTGEDDATIGAGVLLLLGFFTLSPWYKHWIGRLIWWNQYAICRGEAALQVWVPPLLVRGSRDSVILLASLLYPSLIFDITKLLIAVLGPLYLIQAALTSTPYFVRAHVLIRICMLVRSAMGGKYVQMAVLTVGRWFNTYLYDHLSPIQDWAAEGLKGLAVATEPVIFSPMEIKVITWGADTAACGDILCGLPVSARLGRELLLGPADDYKKMGWRLLSPISAYAQQTRGLFGTIVTSLTGRDKNVVTGEVQVLSTATQTFLGTTVGGVMWTVYHGAGSRTLAGNKRPALQMYTNVDQDLVGWPAPAGTKSLDPCTCGSSDLYLVTREADVLPARRRGDSTASLLSTRPLSCLKGSSGGPVMCPSGHVVGIFRAAVCTRGVAKALQFIPVETLSTQVRSPSFSDNSTPPAVPESYQVGYLHAPTGSGKSTKVPAAYVAQGYSVLVLNPSVAATLGFGTYMSKAYGIDPNIRTGTRTITTGAKLTYSTYGKFLADGGCSGGAYDVIICDECHAQDATSILGIGTVLDQAETAGVRLTVLATATPPGSITVPHPNIEEVGLTSDGEIPFYGKALPLAMIKGGRHLVFCHSKEKCDELASKLRGMGVNAVAFYRGLDVSVIPVSGDVVVCATDALMTGYTGDFDTVIDCNVAVEQYVDFSLDPTFSIETRTVPQDAVSRSQRRGRTGRGRPGIYRFVTPGERPSGMFDSVVLCECYDAGCSWYDLQPAETTVRLRAYLSTPGLPVCQDHLDFWERVFTGLTHIDAHFLSQAKQQGLNFAYLVAYQATVCARAKASPPCWDEMWKCLIRLKPTLQGPTPLLYRLGAIQNDICMTHPITKYIMACMSADLEVTTSAWVLVGGVLAALAAYCLSVGCVVIVGHIELGGKPALVPDRQVLYQQYDEMEECSQSAPYIEQAQAIAQQFKDKVLGLLQRASQQEAEIRPIVQSQWQKAEAFWQQHMWNFVSGIQYLAGLSTLPGNPAVASLMAFTASVTSPLTTNQTMFFNILGGWVATHLAGPAASSAFVVSGLAGAAVGGIGIGRVLLDVLAGYGAGVSGALVAFKIMGGELPTTEDMVNLLPAILSPGALVVGVICAAVLRRHVGPGEGAVQWMNRLIAFASRGNHVSPTHYVPESDAAAKVTALLSSLTVTRLLRRLHQWINEDYPSPCNGDWLHDIWDWVCIVLSDFKTWLSAKIMPKVPGIPFLSCQKGYKGVWRGDGVMTTRCPCGEDFTGHVRNGSMRIAGSGLCANMWHGTFPINEYTTGPSTPVPAHNYSRALWRVTSDSYVEVRRVGDTHYVVGATNDGLKIPCQVPAPEFFTELDGVRLHRYAPPCKPLLRDEITFSVGLHSYANGSQLSCEPEPDVAVLTSMLRDPAHITAATAARRLARGSPPSEASSSASQLSAPSLKATCQTHRPHPDAELIDANLLWRQEMGSNITRVESETKVVILDSFEPLRAEEDDTELSIPAECFKKPPKYPPALPIWARPDYNPPLLPSWKDPTYEPPAVHGCALPPTRPAPVPPPRRKRTIKLDGSNVSAALLALAERSFPSTKPEGTGTSSSGVGTESTAESGDSPETGEESDVESYSSMPPLEGEPGDPDLDADSWSTVSDSEEQSVVCCSMSYSWTGAIITPCSAEEEKLPISPLSNSLLRHHNLVYSTSSRSAAARQKKVTFDRLQVLDDHYKNVLKEVKERASGVKGRLLSFEEACSLVPPHSGRSKYGYSAKDVRSLSSKAMNQIRSVWEDLLEDNSTPIPTTIMAKNEVFSVNPAKGGRKPARLIVYPDLGVRVCEKRALYDVIQKLSIATMGPAYGFQYSPKQRVEHLLKMWTSKKTPLGFSYDTRCFDSTVTEHDIRTEEGIYQCCDLEPEARKAISALTERLYIGGPMYNSKGLQCGYRRCRASGVLPTSFGNTITCYIKATAASRAAGLKNPSFLVCGDDLVVISESCGVEEDRTALRAFTEAMTRYSAPPGDAPQPTYDLELISSCSSNVSVACDGAGKRYYYLTRDPETPLARAAWETARHTPVNSWLGNIIMFAPTIWVRMVLITHFFSILQAQEQLERALDFEMYGATYSVTPLDLPAIIERLHGLSAFSLHGYSPTELNRVAGALRKLGIPPLRAWRHRARAVRAKLIAQGGKARICGLYLFNWAVRTKTKLTPLPTAGQLDLSSWFTVGVGGNDIYHSVSRARTRHLLLCLLLLTVGVGIFLLPAR.

The segment covering 1–21 has biased composition (basic residues); it reads MSTLPKPKRQTKRNTLRRPKN. An N-acetylserine; by host modification is found at S2. The tract at residues 2-23 is interaction with STAT1; the sequence is STLPKPKRQTKRNTLRRPKNVK. An interaction with EIF2AK2/PKR region spans residues 2-58; the sequence is STLPKPKRQTKRNTLRRPKNVKFPAGGQIVGEVYVLPRRGPQLGVREVRKTSERSQP. Residues 2–59 form an interaction with DDX3X region; it reads STLPKPKRQTKRNTLRRPKNVKFPAGGQIVGEVYVLPRRGPQLGVREVRKTSERSQPR. Positions 2–75 are disordered; that stretch reads STLPKPKRQT…PKARPREGRS (74 aa). At 2-168 the chain is on the cytoplasmic side; the sequence is STLPKPKRQT…EDGVNYATGN (167 aa). 2 consecutive short sequence motifs (nuclear localization signal) follow at residues 5–13 and 38–43; these read PKPKRQTKR and PRRGPQ. The segment covering 47–57 has biased composition (basic and acidic residues); it reads REVRKTSERSQ. S53 carries the phosphoserine; by host modification. 2 short sequence motifs (nuclear localization signal) span residues 58-64 and 66-71; these read PRGRRQP and PKARPR. The interval 112-152 is important for endoplasmic reticulum and mitochondrial localization; the sequence is PRRRSRNLGKVIDTLTCGFADLMGYIPLIGAPVGGVARALA. A Phosphoserine; by host modification is found at S116. The interval 122-173 is interaction with APOA2; sequence VIDTLTCGFADLMGYIPLIGAPVGGVARALAHGVRALEDGVNYATGNLPGCS. The segment at 164-167 is important for lipid droplets localization; the sequence is YATG. The chain crosses the membrane as a helical span at residues 169–189; the sequence is LPGCSFSIFLLALFSCLTCPA. The propeptide at 178–191 is ER anchor for the core protein, removed in mature form by host signal peptidase; it reads LLALFSCLTCPASS. Over 190 to 359 the chain is Lumenal; it reads SSLEYRNASG…VGAHWGVMAG (170 aa). Residues N196, N209, and N235 are each glycosylated (N-linked (GlcNAc...) asparagine; by host). The tract at residues 266–297 is important for fusion; it reads LVAPPTLCSALYVEDAFGAVSLVGQAFTFRPR. N-linked (GlcNAc...) asparagine; by host glycosylation occurs at N306. The chain crosses the membrane as a helical span at residues 360–380; the sequence is LAYFSMQGNWAKVVIVLIMFS. Over 381–733 the chain is Lumenal; the sequence is GVDATTHTTG…WEFVVLVFLL (353 aa). The tract at residues 386–413 is HVR1; sequence THTTGGSAAQATAGFTSFFTRGPSQNLQ. N-linked (GlcNAc...) (high mannose) asparagine; by host glycans are attached at residues N418, N424, and N431. 4 disulfides stabilise this stretch: C430–C554, C453–C460, C488–C496, and C505–C510. The N-linked (GlcNAc...) asparagine; by host glycan is linked to N449. The segment at 476–480 is HVR2; that stretch reads ANING. N477 carries an N-linked (GlcNAc...) asparagine; by host glycan. The CD81-binding 1 stretch occupies residues 482-495; sequence SEDRPYCWHYPPRP. N534 carries an N-linked (GlcNAc...) asparagine; by host glycan. The interval 546 to 553 is CD81-binding 2; the sequence is PPQGRWFG. N558 carries N-linked (GlcNAc...) asparagine; by host glycosylation. Cystine bridges form between C566–C571, C589–C593, C605–C628, and C615–C652. 2 N-linked (GlcNAc...) (high mannose) asparagine; by host glycosylation sites follow: N631 and N653. C660 and C685 are joined by a disulfide. A PKR/eIF2-alpha phosphorylation homology domain (PePHD) region spans residues 668–679; it reads SEQQPLLHSTTD. The helical transmembrane segment at 734–754 threads the bilayer; the sequence is LADARVCVALWMMLLISQAEA. At 755 to 765 the chain is on the lumenal side; the sequence is AMENLVMLNAL. The helical transmembrane segment at 766 to 786 threads the bilayer; sequence SAAGQQGYVWYLVAFCAAWHI. At 787–790 the chain is on the cytoplasmic side; it reads RGKL. Residues 791–811 traverse the membrane as a helical segment; sequence VPLITYGLTGLWPLALLDLLL. Topologically, residues 812-821 are lumenal; the sequence is PQRAYAWTGE. Residues 822 to 842 form a helical membrane-spanning segment; sequence DDATIGAGVLLLLGFFTLSPW. Topologically, residues 843–889 are cytoplasmic; that stretch reads YKHWIGRLIWWNQYAICRGEAALQVWVPPLLVRGSRDSVILLASLLY. The helical transmembrane segment at 890–910 threads the bilayer; it reads PSLIFDITKLLIAVLGPLYLI. Residues 907 to 1034 form the Peptidase C18 domain; that stretch reads LYLIQAALTS…DYKKMGWRLL (128 aa). The Lumenal segment spans residues 911 to 936; it reads QAALTSTPYFVRAHVLIRICMLVRSA. The tract at residues 912 to 1214 is protease NS2-3; it reads AALTSTPYFV…PVETLSTQVR (303 aa). The S-palmitoyl cysteine; by host moiety is linked to residue C930. Residues 937–957 form a helical membrane-spanning segment; sequence MGGKYVQMAVLTVGRWFNTYL. The segment at 937-957 is interaction with host SCPS1; sequence MGGKYVQMAVLTVGRWFNTYL. The Cytoplasmic portion of the chain corresponds to 958-1665; that stretch reads YDHLSPIQDW…CMSADLEVTT (708 aa). Active-site for protease NS2 activity; shared with dimeric partner residues include H960, E980, and C1001. The Peptidase S29 domain maps to 1035–1216; that stretch reads SPISAYAQQT…ETLSTQVRSP (182 aa). Catalysis depends on charge relay system; for serine protease NS3 activity residues H1091 and D1115. Positions 1131 and 1133 each coordinate Zn(2+). S1173 functions as the Charge relay system; for serine protease NS3 activity in the catalytic mechanism. C1179 and H1183 together coordinate Zn(2+). A Helicase ATP-binding domain is found at 1225-1377; it reads PAVPESYQVG…PNIEEVGLTS (153 aa). Residue 1238 to 1245 coordinates ATP; it reads APTGSGKS. Positions 1245 and 1325 each coordinate Mg(2+). The DECH box signature appears at 1324-1327; sequence DECH. Residues 1387 to 1546 enclose the Helicase C-terminal domain; that stretch reads ALPLAMIKGG…DLQPAETTVR (160 aa). Residues 1494-1506 are RNA-binding; sequence QRRGRTGRGRPGI. Residues 1666–1686 traverse the membrane as a helical segment; that stretch reads SAWVLVGGVLAALAAYCLSVG. The NS3-binding stretch occupies residues 1687–1698; it reads CVVIVGHIELGG. Residues 1687–1813 lie on the Cytoplasmic side of the membrane; it reads CVVIVGHIEL…SVTSPLTTNQ (127 aa). The chain crosses the membrane as a helical span at residues 1814–1834; that stretch reads TMFFNILGGWVATHLAGPAAS. Residues 1835 to 1836 lie on the Lumenal side of the membrane; the sequence is SA. Residues 1837–1857 traverse the membrane as a helical segment; the sequence is FVVSGLAGAAVGGIGIGRVLL. A topological domain (cytoplasmic) is located at residue D1858. A helical transmembrane segment spans residues 1859–1879; it reads VLAGYGAGVSGALVAFKIMGG. At 1880–1889 the chain is on the lumenal side; the sequence is ELPTTEDMVN. The chain crosses the membrane as a helical span at residues 1890-1910; the sequence is LLPAILSPGALVVGVICAAVL. Residues 1911–1980 are Cytoplasmic-facing; sequence RRHVGPGEGA…WINEDYPSPC (70 aa). The S-palmitoyl cysteine; by host moiety is linked to residue C1980. Residues 1981 to 2010 lie within the membrane without spanning it; the sequence is NGDWLHDIWDWVCIVLSDFKTWLSAKIMPK. The Cytoplasmic segment spans residues 2011 to 3002; the sequence is VPGIPFLSCQ…YHSVSRARTR (992 aa). 4 residues coordinate Zn(2+): C2019, C2037, C2039, and C2060. The FKBP8-binding stretch occupies residues 2128–2216; the sequence is EFFTELDGVR…ASSSASQLSA (89 aa). Residues 2128–2340 are transcriptional activation; it reads EFFTELDGVR…PVPPPRRKRT (213 aa). Residues 2143–2147 are interaction with non-structural protein 4A; the sequence is PPCKP. The span at 2195–2218 shows a compositional bias: low complexity; the sequence is ARRLARGSPPSEASSSASQLSAPS. The interval 2195–2226 is disordered; sequence ARRLARGSPPSEASSSASQLSAPSLKATCQTH. Positions 2197-2450 are interaction with host SKP2; the sequence is RLARGSPPSE…AIITPCSAEE (254 aa). Phosphoserine; by host occurs at positions 2202, 2205, 2209, 2212, 2215, and 2218. Residues 2218–2257 form an ISDR region; it reads SLKATCQTHRPHPDAELIDANLLWRQEMGSNITRVESETK. Residues 2218–2283 form an interaction with EIF2AK2/PKR region; sequence SLKATCQTHR…TELSIPAECF (66 aa). The tract at residues 2257–2314 is NS4B-binding; it reads KVVILDSFEPLRAEEDDTELSIPAECFKKPPKYPPALPIWARPDYNPPLLPSWKDPTY. Residues 2307–2385 form a V3 region; it reads PSWKDPTYEP…GTESTAESGD (79 aa). Disordered regions lie at residues 2320 to 2344 and 2357 to 2422; these read HGCA…IKLD and ERSF…STVS. Residues 2330-2333 carry the SH3-binding motif; it reads APVP. A Nuclear localization signal motif is present at residues 2335–2343; that stretch reads PRRKRTIKL. Low complexity predominate over residues 2366–2384; it reads EGTGTSSSGVGTESTAESG. Residues S2461 and S2474 each carry the phosphoserine; by host modification. One can recognise a RdRp catalytic domain in the interval 2646–2764; it reads PLGFSYDTRC…ISESCGVEED (119 aa). The Mg(2+) site is built by D2652, D2750, and D2751. The helical transmembrane segment at 3003–3023 threads the bilayer; it reads HLLLCLLLLTVGVGIFLLPAR.

The protein belongs to the hepacivirus polyprotein family. Homooligomer. Interacts with E1 (via C-terminus). Interacts with the non-structural protein 5A. Interacts (via N-terminus) with host STAT1 (via SH2 domain); this interaction results in decreased STAT1 phosphorylation and ubiquitin-mediated proteasome-dependent STAT1 degradation, leading to decreased IFN-stimulated gene transcription. Interacts with host STAT3; this interaction constitutively activates STAT3. Interacts with host LTBR receptor. Interacts with host TNFRSF1A receptor and possibly induces apoptosis. Interacts with host HNRPK. Interacts with host YWHAE. Interacts with host UBE3A/E6AP. Interacts with host DDX3X. Interacts with host APOA2. Interacts with host RXRA protein. Interacts with host SP110 isoform 3/Sp110b; this interaction sequesters the transcriptional corepressor SP110 away from the nucleus. Interacts with host CREB3 nuclear transcription protein; this interaction triggers cell transformation. Interacts with host ACY3. Interacts with host C1QR1. Interacts with host RBM24; this interaction, which enhances the interaction of the mature core protein with 5'-UTR, may inhibit viral translation and favor replication. Interacts with host EIF2AK2/PKR; this interaction induces the autophosphorylation of EIF2AK2. Part of the viral assembly initiation complex composed of NS2, E1, E2, NS3, NS4A, NS5A and the mature core protein. In terms of assembly, forms a heterodimer with envelope glycoprotein E2. Interacts with mature core protein. Interacts with protease NS2. The heterodimer E1/E2 interacts with host CLDN1; this interaction plays a role in viral entry into host cell. Interacts with host SPSB2 (via C-terminus). Part of the viral assembly initiation complex composed of NS2, E1, E2, NS3, NS4A, NS5A and the mature core protein. Interacts with host NEURL3; this interaction prevents E1 binding to glycoprotein E2. As to quaternary structure, forms a heterodimer with envelope glycoprotein E1. Interacts with host CD81 and SCARB1 receptors; these interactions play a role in viral entry into host cell. Interacts with host EIF2AK2/PKR; this interaction inhibits EIF2AK2 and probably allows the virus to evade the innate immune response. Interacts with host CD209/DC-SIGN and CLEC4M/DC-SIGNR. Interact with host SPCS1; this interaction is essential for viral particle assembly. Interacts with protease NS2. The heterodimer E1/E2 interacts with host CLDN1; this interaction plays a role in viral entry into host cell. Part of the viral assembly initiation complex composed of NS2, E1, E2, NS3, NS4A, NS5A and the mature core protein. Interacts with host SLC3A2/4F2hc; the interaction may facilitate viral entry into host cell. Interacts with human PLSCR1. Homohexamer. Homoheptamer. Interacts with protease NS2. In terms of assembly, homodimer. Interacts with host SPCS1; this interaction is essential for viral particle assembly. Interacts with envelope glycoprotein E1. Interacts with envelope glycoprotein E2. Interacts with viroporin p7. Interacts with serine protease/helicase NS3. Part of the replication complex composed of NS2, NS3, NS4A, NS4B, NS5A and the RNA-directed RNA polymerase embedded in an ER-derived membranous web. Part of the viral assembly initiation complex composed of NS2, E1, E2, NS3, NS4A, NS5A and the mature core protein. As to quaternary structure, interacts with protease NS2. Interacts with non-structural protein 4A; this interaction stabilizes the folding of NS3 serine protease. NS3-NS4A interaction is essential for NS3 activation and allows membrane anchorage of the latter. NS3/NS4A complex also prevents phosphorylation of host IRF3, thus preventing the establishment of dsRNA induced antiviral state. Interacts with host MAVS; this interaction leads to the cleavage and inhibition of host MAVS. Interacts with host TICAM1; this interaction leads to the cleavage and inhibition of host TICAM1. Interacts with host TANK-binding kinase/TBK1; this interaction results in the inhibition of the association between TBK1 and IRF3, which leads to the inhibition of IRF3 activation. Interacts with host RBM24. Part of the replication complex composed of NS2, NS3, NS4A, NS4B, NS5A and the RNA-directed RNA polymerase embedded in an ER-derived membranous web. Part of the viral assembly initiation complex composed of NS2, E1, E2, NS3, NS4A, NS5A and the mature core protein. Interacts with NS3 serine protease; this interaction stabilizes the folding of NS3 serine protease. NS3-NS4A interaction is essential for NS3 activation and allows membrane anchorage of the latter. Interacts with non-structural protein 5A (via N-terminus). Part of the replication complex composed of NS2, NS3, NS4A, NS4B, NS5A and the RNA-directed RNA polymerase embedded in an ER-derived membranous web. Part of the viral assembly initiation complex composed of NS2, E1, E2, NS3, NS4A, NS5A and the mature core protein. In terms of assembly, homomultimer. Interacts with non-structural protein NS5A. Interacts with host PLA2G4C; this interaction likely initiates the recruitment of replication complexes to lipid droplets. Interacts with host STING; this interaction disrupts the interaction between STING and TBK1 thereby suppressing the interferon signaling. Part of the replication complex composed of NS2, NS3, NS4A, NS4B, NS5A and the RNA-directed RNA polymerase embedded in an ER-derived membranous web. As to quaternary structure, monomer. Homodimer; dimerization is required for RNA-binding. Interacts with the mature core protein. Interacts (via N-terminus) with non-structural protein 4A. Interacts with non-structural protein 4B. Interacts (via region D2) with RNA-directed RNA polymerase. Part of the viral assembly initiation complex composed of NS2, E1, E2, NS3, NS4A, NS5A and the mature core protein. Part of the replication complex composed of NS2, NS3, NS4A, NS4B, NS5A and the RNA-directed RNA polymerase embedded in an ER-derived membranous web. Interacts with host GRB2. Interacts with host BIN1. Interacts with host PIK3R1. Interacts with host SRCAP. Interacts with host FKBP8. Interacts (via C-terminus) with host VAPB (via MSP domain). Interacts with host EIF2AK2/PKR; this interaction leads to disruption of EIF2AK2 dimerization by NS5A and probably allows the virus to evade the innate immune response. Interacts (via N-terminus) with host PACSIN2 (via N-terminus); this interaction attenuates protein kinase C alpha-mediated phosphorylation of PACSIN2 by disrupting the interaction between PACSIN2 and PRKCA. Interacts (via N-terminus) with host SRC kinase (via SH2 domain). Interacts with most Src-family kinases. Interacts with host IFI27 and SKP2; promotes the ubiquitin-mediated proteasomal degradation of NS5A. Interacts with host GPS2. Interacts with host TNFRSF21; this interaction allows the modulation by the virus of JNK, p38 MAPK, STAT3, and Akt signaling pathways in a DR6-dependent manner. Interacts (via N-terminus) with host CIDEB (via N-terminus); this interaction seems to regulate the association of HCV particles with APOE. Interacts with host CHKA/Choline Kinase-alpha; CHKA bridges host PI4KA and NS5A and potentiates NS5A-stimulated PI4KA activity, which then facilitates the targeting of the ternary complex to the ER for viral replication. Interacts with host SPSB2 (via C-terminus); this interaction targets NS5A for ubiquitination and degradation. Interacts with host RAB18; this interaction may promote the association of NS5A and other replicase components with lipid droplets. Interacts (via region D2) with host PPIA/CYPA; the interaction stimulates RNA-binding ability of NS5A and is dependent on the peptidyl-prolyl cis-trans isomerase activity of PPIA/CYPA. Interacts with host TRIM14; this interaction induces the degradation of NS5A. Homooligomer. Interacts with non-structural protein 5A. Interacts with host VAPB. Interacts with host PRK2/PKN2. Interacts with host HNRNPA1 and SEPT6; these interactions facilitate viral replication. Part of the replication complex composed of NS2, NS3, NS4A, NS4B, NS5A and the RNA-directed RNA polymerase. It depends on Zn(2+) as a cofactor. Requires Mg(2+) as cofactor. Post-translationally, specific enzymatic cleavages in vivo yield mature proteins. The structural proteins, core, E1, E2 and p7 are produced by proteolytic processing by host signal peptidases. The core protein precursor is synthesized as a 23 kDa, which is retained in the ER membrane through the hydrophobic signal peptide. Cleavage by the signal peptidase releases the 21 kDa mature core protein. The cleavage of the core protein precursor occurs between aminoacids 176 and 188 but the exact cleavage site is not known. Some degraded forms of the core protein appear as well during the course of infection. The other proteins (p7, NS2, NS3, NS4A, NS4B, NS5A and NS5B) are cleaved by the viral proteases. Autoprocessing between NS2 and NS3 is mediated by the NS2 cysteine protease catalytic domain and regulated by the NS3 N-terminal domain. In terms of processing, phosphorylated by host PKC and PKA. Ubiquitinated; mediated by UBE3A and leading to core protein subsequent proteasomal degradation. Post-translationally, highly N-glycosylated. In terms of processing, palmitoylation is required for NS2/3 autoprocessing and E2 recruitment to membranes. Palmitoylated. This modification may play a role in its polymerization or in protein-protein interactions. Post-translationally, phosphorylated on serines in a basal form termed p56. p58 is a hyperphosphorylated form of p56. p56 and p58 coexist in the cell in roughly equivalent amounts. Hyperphosphorylation is dependent on the presence of NS4A. Host CSNK1A1/CKI-alpha or RPS6KB1 kinases may be responsible for NS5A phosphorylation. In terms of processing, tyrosine phosphorylation is essential for the interaction with host SRC. The N-terminus is phosphorylated by host PRK2/PKN2.

It localises to the host endoplasmic reticulum membrane. The protein resides in the host mitochondrion membrane. The protein localises to the virion. Its subcellular location is the host cytoplasm. It is found in the host nucleus. It localises to the host lipid droplet. The protein resides in the virion membrane. The protein localises to the host mitochondrion. Its subcellular location is the host cell membrane. It is found in the host perinuclear region. The catalysed reaction is Hydrolysis of four peptide bonds in the viral precursor polyprotein, commonly with Asp or Glu in the P6 position, Cys or Thr in P1 and Ser or Ala in P1'.. The enzyme catalyses a ribonucleoside 5'-triphosphate + H2O = a ribonucleoside 5'-diphosphate + phosphate + H(+). It carries out the reaction ATP + H2O = ADP + phosphate + H(+). It catalyses the reaction RNA(n) + a ribonucleoside 5'-triphosphate = RNA(n+1) + diphosphate. With respect to regulation, inhibited by the antiviral drug hexamethylene amiloride. Inhibition by amantadine appears to be genotype-dependent. Also inhibited by long-alkyl-chain iminosugar derivatives. Its activity is regulated as follows. Activity is up-regulated by PRK2/PKN2-mediated phosphorylation. In terms of biological role, packages viral RNA to form a viral nucleocapsid, and promotes virion budding. Participates in the viral particle production as a result of its interaction with the non-structural protein 5A. Binds RNA and may function as a RNA chaperone to induce the RNA structural rearrangements taking place during virus replication. Modulates viral translation initiation by interacting with viral IRES and 40S ribosomal subunit. Affects various cell signaling pathways, host immunity and lipid metabolism. Prevents the establishment of cellular antiviral state by blocking the interferon-alpha/beta (IFN-alpha/beta) and IFN-gamma signaling pathways and by blocking the formation of phosphorylated STAT1 and promoting ubiquitin-mediated proteasome-dependent degradation of STAT1. Activates STAT3 leading to cellular transformation. Regulates the activity of cellular genes, including c-myc and c-fos. May repress the promoter of p53, and sequester CREB3 and SP110 isoform 3/Sp110b in the cytoplasm. Represses cell cycle negative regulating factor CDKN1A, thereby interrupting an important check point of normal cell cycle regulation. Targets transcription factors involved in the regulation of inflammatory responses and in the immune response: suppresses TNF-induced NF-kappa-B activation, and activates AP-1. Binds to dendritic cells (DCs) via C1QR1, resulting in down-regulation of T-lymphocytes proliferation. Alters lipid metabolism by interacting with hepatocellular proteins involved in lipid accumulation and storage. Induces up-regulation of FAS promoter activity, and thereby contributes to the increased triglyceride accumulation in hepatocytes (steatosis). Its function is as follows. Forms a heterodimer with envelope glycoprotein E2, which mediates virus attachment to the host cell, virion internalization through clathrin-dependent endocytosis and fusion with host membrane. Fusion with the host cell is most likely mediated by both E1 and E2, through conformational rearrangements of the heterodimer required for fusion rather than a classical class II fusion mechanism. E1/E2 heterodimer binds host apolipoproteins such as APOB and ApoE thereby forming a lipo-viro-particle (LVP). APOE associated to the LVP allows the initial virus attachment to cell surface receptors such as the heparan sulfate proteoglycans (HSPGs), syndecan-1 (SDC1), syndecan-1 (SDC2), the low-density lipoprotein receptor (LDLR) and scavenger receptor class B type I (SCARB1). The cholesterol transfer activity of SCARB1 allows E2 exposure and binding of E2 to SCARB1 and the tetraspanin CD81. E1/E2 heterodimer binding on CD81 activates the epithelial growth factor receptor (EGFR) signaling pathway. Diffusion of the complex E1-E2-EGFR-SCARB1-CD81 to the cell lateral membrane allows further interaction with Claudin 1 (CLDN1) and occludin (OCLN) to finally trigger HCV entry. Functionally, forms a heterodimer with envelope glycoprotein E1, which mediates virus attachment to the host cell, virion internalization through clathrin-dependent endocytosis and fusion with host membrane. Fusion with the host cell is most likely mediated by both E1 and E2, through conformational rearrangements of the heterodimer required for fusion rather than a classical class II fusion mechanism. The interaction between envelope glycoprotein E2 and host apolipoprotein E/APOE allows the proper assembly, maturation and infectivity of the viral particles. This interaction is probably promoted via the up-regulation of cellular autophagy by the virus. E1/E2 heterodimer binds host apolipoproteins such as APOB and APOE thereby forming a lipo-viro-particle (LVP). APOE associated to the LVP allows the initial virus attachment to cell surface receptors such as the heparan sulfate proteoglycans (HSPGs), syndecan-1 (SDC1), syndecan-1 (SDC2), the low-density lipoprotein receptor (LDLR) and scavenger receptor class B type I (SCARB1). The cholesterol transfer activity of SCARB1 allows E2 exposure and binding of E2 to SCARB1 and the tetraspanin CD81. E1/E2 heterodimer binding on CD81 activates the epithelial growth factor receptor (EGFR) signaling pathway. Diffusion of the complex E1-E2-EGFR-SCARB1-CD81 to the cell lateral membrane allows further interaction with Claudin 1 (CLDN1) and occludin (OCLN) to finally trigger HCV entry. Inhibits host EIF2AK2/PKR activation, preventing the establishment of an antiviral state. Viral ligand for CD209/DC-SIGN and CLEC4M/DC-SIGNR, which are respectively found on dendritic cells (DCs), and on liver sinusoidal endothelial cells and macrophage-like cells of lymph node sinuses. These interactions allow the capture of circulating HCV particles by these cells and subsequent facilitated transmission to permissive cells such as hepatocytes and lymphocyte subpopulations. The interaction between E2 and host amino acid transporter complex formed by SLC3A2 and SLC7A5/LAT1 may facilitate viral entry into host cell. Ion channel protein that acts as a viroporin and plays an essential role in the assembly, envelopment and secretion of viral particles. Regulates the host cell secretory pathway, which induces the intracellular retention of viral glycoproteins and favors assembly of viral particles. Creates a pore in acidic organelles and releases Ca(2+) and H(+) in the cytoplasm of infected cells, leading to a productive viral infection. High levels of cytoplasmic Ca(2+) may trigger membrane trafficking and transport of viral ER-associated proteins to viroplasms, sites of viral genome replication. This ionic imbalance induces the assembly of the inflammasome complex, which triggers the maturation of pro-IL-1beta into IL-1beta through the action of caspase-1. Targets also host mitochondria and induces mitochondrial depolarization. In addition of its role as a viroporin, acts as a lipid raft adhesion factor. In terms of biological role, cysteine protease required for the proteolytic auto-cleavage between the non-structural proteins NS2 and NS3. The N-terminus of NS3 is required for the function of NS2 protease (active region NS2-3). Promotes the initiation of viral particle assembly by mediating the interaction between structural and non-structural proteins. Its function is as follows. Displays three enzymatic activities: serine protease with a chymotrypsin-like fold, NTPase and RNA helicase. NS3 serine protease, in association with NS4A, is responsible for the cleavages of NS3-NS4A, NS4A-NS4B, NS4B-NS5A and NS5A-NS5B. The NS3/NS4A complex prevents phosphorylation of host IRF3, thus preventing the establishment of dsRNA induced antiviral state. The NS3/NS4A complex induces host amino acid transporter component SLC3A2, thus contributing to HCV propagation. NS3 RNA helicase binds to RNA and unwinds both dsDNA and dsRNA in the 3' to 5' direction, and likely resolves RNA complicated stable secondary structures in the template strand. Binds a single ATP and catalyzes the unzipping of a single base pair of dsRNA. Inhibits host antiviral proteins TBK1 and IRF3 thereby preventing the establishment of an antiviral state. Cleaves host MAVS/CARDIF thereby preventing the establishment of an antiviral state. Cleaves host TICAM1/TRIF, thereby disrupting TLR3 signaling and preventing the establishment of an antiviral state. Functionally, peptide cofactor which forms a non-covalent complex with the N-terminal of NS3 serine protease. The NS3/NS4A complex prevents phosphorylation of host IRF3, thus preventing the establishment of dsRNA induced antiviral state. The NS3/NS4A complex induces host amino acid transporter component SLC3A2, thus contributing to HCV propagation. Induces a specific membrane alteration that serves as a scaffold for the virus replication complex. This membrane alteration gives rise to the so-called ER-derived membranous web that contains the replication complex. NS4B self-interaction contributes to its function in membranous web formation. Promotes host TRIF protein degradation in a CASP8-dependent manner thereby inhibiting host TLR3-mediated interferon signaling. Disrupts the interaction between STING and TBK1 contributing to the inhibition of interferon signaling. In terms of biological role, phosphorylated protein that is indispensable for viral replication and assembly. Both hypo- and hyperphosphorylated states are required for the viral life cycle. The hyperphosphorylated form of NS5A is an inhibitor of viral replication. Involved in RNA-binding and especially in binding to the viral genome. Zinc is essential for RNA-binding. Participates in the viral particle production as a result of its interaction with the mature viral core protein. Its interaction with host VAPB may target the viral replication complex to vesicles. Down-regulates viral IRES translation initiation. Mediates interferon resistance, presumably by interacting with and inhibiting host EIF2AK2/PKR. Prevents BIN1-induced apoptosis. Acts as a transcriptional activator of some host genes important for viral replication when localized in the nucleus. Via the interaction with host PACSIN2, modulates lipid droplet formation in order to promote virion assembly. Modulates TNFRSF21/DR6 signaling pathway for viral propagation. Its function is as follows. RNA-dependent RNA polymerase that performs primer-template recognition and RNA synthesis during viral replication. Initiates RNA transcription/replication at a flavin adenine dinucleotide (FAD), resulting in a 5'- FAD cap on viral RNAs. In this way, recognition of viral 5' RNA by host pattern recognition receptors can be bypassed, thereby evading activation of antiviral pathways. In Homo sapiens (Human), this protein is Genome polyprotein.